The primary structure comprises 420 residues: Disease resistance protein CHS1 (420 aa).

Positions 12 to 167 (RELDVFLSFS…QIADDIRLMF (156 aa)) constitute a TIR domain. Glutamate 86 is a catalytic residue. One can recognise an NB-ARC domain in the interval 185-406 (MKALYALLAL…KDIKEVWKIM (222 aa)).

Mostly expressed in leaves and flowers (mainly in sepals), and, at a lower intensity, in stems. Present at low levels in roots and seeds.

It is found in the cytoplasm. The protein localises to the nucleus. It carries out the reaction NAD(+) + H2O = ADP-D-ribose + nicotinamide + H(+). Its function is as follows. Confers resistance to low temperatures by limiting chloroplast damage and cell death, thus maintaining growth homeostasis. Regulates steryl-esters and sterols accumulation. Limits leaf necrosis associated with virulent bacterial infection (e.g. Pseudomonas syringae pv. tomato DC3000). In Arabidopsis thaliana (Mouse-ear cress), this protein is Disease resistance protein CHS1.